We begin with the raw amino-acid sequence, 81 residues long: uncharacterized protein (81 aa).

Residues 1-16 (MNRLTFYGLCLSGAVG) form the signal peptide. Residues 55–81 (TIDPHHNHHDDHHDSHGHGHGKIKGHH) are disordered. Residues 57–71 (DPHHNHHDDHHDSHG) are compositionally biased toward basic and acidic residues. Residues 72–81 (HGHGKIKGHH) show a composition bias toward basic residues.

It localises to the secreted. This is an uncharacterized protein from Dictyostelium discoideum (Social amoeba).